A 429-amino-acid polypeptide reads, in one-letter code: Palmitoyltransferase SWF1 (429 aa).

The Lumenal segment spans residues 1–3 (MGT). The chain crosses the membrane as a helical span at residues 4 to 24 (IAIIAAVILGISFMTFVAFFG). The Cytoplasmic segment spans residues 25–79 (RLPALRNTPISFLHRLIWIHLPNGILTVDRTLTNGRLTTSLTRLGRHLWYDQHPT). The chain crosses the membrane as a helical span at residues 80-100 (ILIFFFLLLSVGEYLYLPVAW). Over 101-112 (PHFSFTHKFFGT) the chain is Lumenal. Residues 113 to 133 (IAILCPYIFLYLSAYTDPGVI) form a helical membrane-spanning segment. Topologically, residues 134-201 (NAKTHVREMA…CVGANNQRWF (68 aa)) are cytoplasmic. The DHHC domain occupies 156-206 (TSCETCHLLKPARSKHCSICKKCVGRMDHHCIFINNCVGANNQRWFILLLL). The helical transmembrane segment at 202 to 222 (ILLLLSTAILTLYGGVLGLVI) threads the bilayer. Residues 223 to 274 (IRAKIQARFPYWTLMPWWTSTQAWNSGDLDFHRWLLLWSWGLQSGVAMGGVT) lie on the Lumenal side of the membrane. The chain crosses the membrane as a helical span at residues 275 to 295 (LLALLTTPLVWGLLGYHLWLV). The Cytoplasmic portion of the chain corresponds to 296–429 (YCGTTTNESM…ERGRNRRRSS (134 aa)). Residues 408-421 (GRSPVDEREFGRER) are compositionally biased toward basic and acidic residues. The tract at residues 408–429 (GRSPVDEREFGRERGRNRRRSS) is disordered.

This sequence belongs to the DHHC palmitoyltransferase family. SWF1 subfamily.

It localises to the endoplasmic reticulum membrane. The enzyme catalyses L-cysteinyl-[protein] + hexadecanoyl-CoA = S-hexadecanoyl-L-cysteinyl-[protein] + CoA. In terms of biological role, palmitoyltransferase that targets several endosomal SNAREs. Palmitoylates the SNAREs at cysteine residues close to the cytoplasmic end of their transmembrane domain. May have a role in the cellular quality control of transmembrane domain-containing proteins. This is Palmitoyltransferase SWF1 (swf-1) from Neurospora crassa (strain ATCC 24698 / 74-OR23-1A / CBS 708.71 / DSM 1257 / FGSC 987).